Reading from the N-terminus, the 1324-residue chain is Tetratricopeptide repeat protein 21 homolog (1324 aa).

16 TPR repeats span residues 58-91, 414-446, 582-615, 669-702, 737-770, 772-804, 806-837, 847-880, 894-927, 929-961, 963-995, 997-1029, 1033-1066, 1205-1238, 1240-1272, and 1274-1307; these read PALA…NDVA, SPLY…LVEM, SLYH…PRKE, DQLV…QSNF, PGSY…QSKD, QLAE…YKDK, MRLK…DPEP, IQFL…HSRI, ARIC…HETD, KANL…DPHN, EANS…NPQH, HALS…NPRC, SGYN…AAGW, EKCW…NCNC, KAFE…TKER, and PGFG…NPQY.

It belongs to the TTC21 family. As to quaternary structure, component of the IFT complex A (IFT-A) composed of at least che-11, daf-10, dyf-2, ift-139, ift-43 and ifta-1. As to expression, expressed in ciliated sensory neurons in the head and tail.

The protein localises to the cell projection. It is found in the cilium. Its subcellular location is the cytoplasm. It localises to the cytoskeleton. The protein resides in the cilium basal body. The protein localises to the dendrite. Component of the IFT complex A (IFT-A), a complex required for retrograde ciliary transport. In particular, may act redundantly with the intraflagellar transport protein ift-43 to regulate the transport of specific ciliary cargo proteins such as che-3 which are related to motility. Functions in cilia biogenesis. This chain is Tetratricopeptide repeat protein 21 homolog, found in Caenorhabditis elegans.